A 60-amino-acid polypeptide reads, in one-letter code: Large ribosomal subunit protein uL30 (60 aa).

This sequence belongs to the universal ribosomal protein uL30 family. In terms of assembly, part of the 50S ribosomal subunit.

The protein is Large ribosomal subunit protein uL30 of Cupriavidus necator (strain ATCC 17699 / DSM 428 / KCTC 22496 / NCIMB 10442 / H16 / Stanier 337) (Ralstonia eutropha).